The following is a 149-amino-acid chain: MELNSLRPALGSTKNRKRIGRGIGSGHGKTATKGHKGQKARSGGSIKPGFEGGQMPLQRRLPKRGFRPLDRNEYVLINLQQLDVFEAGSCVDRDAMNAKGLLKKSDLPIKVLANGDLTKALTIKADKFSKSAIDKIQAAGGKIEGISAC.

Positions 1–61 are disordered; that stretch reads MELNSLRPAL…GGQMPLQRRL (61 aa). The span at 30–39 shows a compositional bias: basic residues; sequence TATKGHKGQK.

This sequence belongs to the universal ribosomal protein uL15 family. Part of the 50S ribosomal subunit.

Functionally, binds to the 23S rRNA. This is Large ribosomal subunit protein uL15 from Trichlorobacter lovleyi (strain ATCC BAA-1151 / DSM 17278 / SZ) (Geobacter lovleyi).